A 472-amino-acid polypeptide reads, in one-letter code: Ribosomal protein uS12 methylthiotransferase RimO (472 aa).

Residues 33–143 enclose the MTTase N-terminal domain; sequence NRIGFVSLGC…VLKHVHKYVP (111 aa). [4Fe-4S] cluster contacts are provided by cysteine 42, cysteine 78, cysteine 107, cysteine 175, cysteine 179, and cysteine 182. The region spanning 161-398 is the Radical SAM core domain; sequence LTPKHYAYLK…MEVQAEISAE (238 aa). In terms of domain architecture, TRAM spans 401–467; the sequence is ARFVGRTLDI…EHDLWAEVVD (67 aa).

The protein belongs to the methylthiotransferase family. RimO subfamily. The cofactor is [4Fe-4S] cluster.

Its subcellular location is the cytoplasm. It carries out the reaction L-aspartate(89)-[ribosomal protein uS12]-hydrogen + (sulfur carrier)-SH + AH2 + 2 S-adenosyl-L-methionine = 3-methylsulfanyl-L-aspartate(89)-[ribosomal protein uS12]-hydrogen + (sulfur carrier)-H + 5'-deoxyadenosine + L-methionine + A + S-adenosyl-L-homocysteine + 2 H(+). Catalyzes the methylthiolation of an aspartic acid residue of ribosomal protein uS12. The protein is Ribosomal protein uS12 methylthiotransferase RimO of Shewanella baltica (strain OS155 / ATCC BAA-1091).